Consider the following 173-residue polypeptide: Ribosome maturation factor RimM (173 aa).

The region spanning 98-171 (DDQYYYDEII…LITIDALEGL (74 aa)) is the PRC barrel domain.

This sequence belongs to the RimM family. As to quaternary structure, binds ribosomal protein uS19.

Its subcellular location is the cytoplasm. Its function is as follows. An accessory protein needed during the final step in the assembly of 30S ribosomal subunit, possibly for assembly of the head region. Essential for efficient processing of 16S rRNA. May be needed both before and after RbfA during the maturation of 16S rRNA. It has affinity for free ribosomal 30S subunits but not for 70S ribosomes. The protein is Ribosome maturation factor RimM of Leuconostoc mesenteroides subsp. mesenteroides (strain ATCC 8293 / DSM 20343 / BCRC 11652 / CCM 1803 / JCM 6124 / NCDO 523 / NBRC 100496 / NCIMB 8023 / NCTC 12954 / NRRL B-1118 / 37Y).